Consider the following 509-residue polypeptide: 2-isopropylmalate synthase (509 aa).

One can recognise a Pyruvate carboxyltransferase domain in the interval I5 to K267. Residues D14, H202, H204, and N238 each coordinate Mn(2+). A regulatory domain region spans residues K391–N509.

It belongs to the alpha-IPM synthase/homocitrate synthase family. LeuA type 1 subfamily. As to quaternary structure, homodimer. Requires Mn(2+) as cofactor.

The protein resides in the cytoplasm. It carries out the reaction 3-methyl-2-oxobutanoate + acetyl-CoA + H2O = (2S)-2-isopropylmalate + CoA + H(+). Its pathway is amino-acid biosynthesis; L-leucine biosynthesis; L-leucine from 3-methyl-2-oxobutanoate: step 1/4. Catalyzes the condensation of the acetyl group of acetyl-CoA with 3-methyl-2-oxobutanoate (2-ketoisovalerate) to form 3-carboxy-3-hydroxy-4-methylpentanoate (2-isopropylmalate). This chain is 2-isopropylmalate synthase, found in Staphylococcus aureus (strain MW2).